The following is an 81-amino-acid chain: Cysteine-rich and transmembrane domain-containing protein PCC1 (81 aa).

Positions 1-22 (MNQSAQNYFSVQKPSETSSGPY) are enriched in polar residues. Positions 1-34 (MNQSAQNYFSVQKPSETSSGPYTSPPPIGYPTRD) are disordered. A helical transmembrane segment spans residues 56-74 (AIMSCFSTCMECIFCCGVC).

The protein belongs to the CYSTM1 family. In terms of tissue distribution, expressed at very low levels in seedlings and petioles, and at higher levels in leaves. Also present in phloem sap.

It localises to the cell membrane. In terms of biological role, modulates resistance against pathogens including oomycetes (e.g. Hyaloperonospora parasitica and Phytophthora brassicae) and fungi (e.g. Phytophthora brassicae). Controls the abscisic acid-mediated (ABA) signaling pathways. Regulator of the flowering time in response to stress (e.g. UV-C). Regulates polar lipid content; promotes phosphatidylinositol (PI) and 18:0 but prevents 18:2 and 18:3 polar lipids accumulation. In Arabidopsis thaliana (Mouse-ear cress), this protein is Cysteine-rich and transmembrane domain-containing protein PCC1 (PCC1).